The following is a 427-amino-acid chain: O-methyltransferase sol2 (427 aa).

Asp-281 is a binding site for S-adenosyl-L-methionine. The active-site Proton acceptor is the His-327.

The protein belongs to the class I-like SAM-binding methyltransferase superfamily. Cation-independent O-methyltransferase family. COMT subfamily.

Its pathway is phytotoxin biosynthesis. O-methyltransferase; part of the gene cluster that mediates the biosynthesis of the phytotoxin solanapyrone, a causal agent of early blight disease of potato and tomato. The prosolanapyrone synthase sol1 is a polyketide synthase that produces the octaketide desmethylprosolanapyrone I via sequential condensations of 7 malonyl-CoA units with one acetyl-CoA unit, and one methylation step. The octaketide backbone is further methylated by the sol2 O-methyltransferase to yield prosolanapyrone I. Prosolanapyrone I is hydroxylated to prosolanapyrone II by the cytochrome P450 monooxygenase sol6. The solanapyrone synthase sol5 then catalyzes the oxidation of prosolanapyrone II and the subsequent Diels Alder cycloisomerization of the product prosolanapyrone III to solanapyrones A and D. Solanapyrones A and D are then converted into solanapyrones B and E, respectively, by the sol3 dehydrogenase. This is O-methyltransferase sol2 (sol2) from Alternaria solani.